Here is a 66-residue protein sequence, read N- to C-terminus: Large ribosomal subunit protein bL35 (66 aa).

Over residues 1–26 the composition is skewed to basic residues; the sequence is MPKMKTHRGSAKRFKKTGSGKLKRSH. Positions 1-48 are disordered; the sequence is MPKMKTHRGSAKRFKKTGSGKLKRSHAYTSHLFANKSQKQKRKLRKSA.

Belongs to the bacterial ribosomal protein bL35 family.

The chain is Large ribosomal subunit protein bL35 from Bacillus licheniformis (strain ATCC 14580 / DSM 13 / JCM 2505 / CCUG 7422 / NBRC 12200 / NCIMB 9375 / NCTC 10341 / NRRL NRS-1264 / Gibson 46).